The chain runs to 373 residues: PqqA peptide cyclase (373 aa).

One can recognise a Radical SAM core domain in the interval 7–227 (ILNPVGLLAE…EVYAGVIVID (221 aa)). C21, C25, and C28 together coordinate [4Fe-4S] cluster.

The protein belongs to the radical SAM superfamily. PqqE family. Interacts with PqqD. The interaction is necessary for activity of PqqE. Requires [4Fe-4S] cluster as cofactor.

The catalysed reaction is [PQQ precursor protein] + S-adenosyl-L-methionine = E-Y cross-linked-[PQQ precursor protein] + 5'-deoxyadenosine + L-methionine + H(+). It functions in the pathway cofactor biosynthesis; pyrroloquinoline quinone biosynthesis. In terms of biological role, catalyzes the cross-linking of a glutamate residue and a tyrosine residue in the PqqA protein as part of the biosynthesis of pyrroloquinoline quinone (PQQ). This Methylocella silvestris (strain DSM 15510 / CIP 108128 / LMG 27833 / NCIMB 13906 / BL2) protein is PqqA peptide cyclase.